We begin with the raw amino-acid sequence, 191 residues long: Transcription factor HES-2 (191 aa).

Residues 1 to 26 (MAPNVALADSMHNYQPKPGKRNQEAS) are disordered. One can recognise a bHLH domain in the interval 28 to 85 (LRKTLKPLMEKRRRARINESLNQLKTLILPLIGKDNSRYSKLEKADILEMTVRFLRDI). Residues 97–130 (YKEGYRACVERLSAILGKSHVLTGEASNRLLEYL) form the Orange domain. Composition is skewed to polar residues over residues 159–173 (RTSQ…QPSS) and 182–191 (QLNSSIWRPW). Residues 159–191 (RTSQFGSPLQNQPSSHRPAPCPPQLNSSIWRPW) form a disordered region. The WRPW motif signature appears at 188-191 (WRPW).

Transcription repression requires formation of a complex with a corepressor protein of the Groucho/TLE family. Homodimer, and heterodimer with the other bHLH proteins neurod1, neurod4/ath3, hes1/hairy1 and hes6r. Weakly interacts with the bHLH protein hey1/hrt1. Expressed in the animal half of the early cleavage stage embryo. During neurulation and organogenesis, the otic vesicles and retina are the main sites of expression; expression in otic placodes begins as early as stage 13.5, persisting in the otic vesicles at stage 30 and beyond. Also transiently expressed in the olfactory placodes. In addition, weakly expressed in primary neurons. Expression in the retina begins at stage 21, and is seen throughout the neural retina by stage 30. From stage 35 onwards, expression progressively declines in the central retina, while remaining high in the margins. At stage 41, expression becomes restricted to the ciliary marginal zone (CMZ) of the retina, the only region where retinogenesis is still occurring.

It localises to the nucleus. In terms of biological role, transcriptional repressor. Essential in the retina to govern glial versus neuronal differentiation. Promotes gliogenesis through the inhibition of neuronal differentiation by at least two distinct mechanisms; represses proneural gene transcription, and also physically interacts with proneural proteins, including neurod1. This is Transcription factor HES-2 (hes2) from Xenopus laevis (African clawed frog).